The sequence spans 510 residues: Histidine ammonia-lyase (510 aa).

A cross-link (5-imidazolinone (Ala-Gly)) is located at residues 143 to 145; it reads ASG. The residue at position 144 (serine 144) is a 2,3-didehydroalanine (Ser).

This sequence belongs to the PAL/histidase family. Post-translationally, contains an active site 4-methylidene-imidazol-5-one (MIO), which is formed autocatalytically by cyclization and dehydration of residues Ala-Ser-Gly.

Its subcellular location is the cytoplasm. The catalysed reaction is L-histidine = trans-urocanate + NH4(+). The protein operates within amino-acid degradation; L-histidine degradation into L-glutamate; N-formimidoyl-L-glutamate from L-histidine: step 1/3. This chain is Histidine ammonia-lyase, found in Yersinia pestis.